We begin with the raw amino-acid sequence, 354 residues long: Probable alcohol acetyltransferase (354 aa).

Residues serine 124 and histidine 293 each act as charge relay system in the active site.

The protein belongs to the AB hydrolase superfamily.

Its function is as follows. Probable alcohol acetyltransferase that uses acetyl-CoA to synthesize acetate esters from various alcohols. Not involved in the synthesis of ethyl acetate. In Cyberlindnera jadinii (strain ATCC 18201 / CBS 1600 / BCRC 20928 / JCM 3617 / NBRC 0987 / NRRL Y-1542) (Torula yeast), this protein is Probable alcohol acetyltransferase (EAT2).